The sequence spans 199 residues: Cytochrome c oxidase subunit 2 (199 aa).

Residues 1–13 traverse the membrane as a helical segment; sequence AICSLVLYLLTLM. At 14-26 the chain is on the mitochondrial matrix side; the sequence is LMEKLSSNSVDAQ. A helical transmembrane segment spans residues 27–54; the sequence is EVELVWTILPAIVLILLALPSLQILYMM. Topologically, residues 55–199 are mitochondrial intermembrane; sequence DEIDEPDLTL…SSLLSTSSSL (145 aa). Cu cation contacts are provided by histidine 128, cysteine 163, glutamate 165, cysteine 167, histidine 171, and methionine 174. Glutamate 165 contacts Mg(2+).

Belongs to the cytochrome c oxidase subunit 2 family. As to quaternary structure, component of the cytochrome c oxidase (complex IV, CIV), a multisubunit enzyme composed of 14 subunits. The complex is composed of a catalytic core of 3 subunits MT-CO1, MT-CO2 and MT-CO3, encoded in the mitochondrial DNA, and 11 supernumerary subunits COX4I, COX5A, COX5B, COX6A, COX6B, COX6C, COX7A, COX7B, COX7C, COX8 and NDUFA4, which are encoded in the nuclear genome. The complex exists as a monomer or a dimer and forms supercomplexes (SCs) in the inner mitochondrial membrane with NADH-ubiquinone oxidoreductase (complex I, CI) and ubiquinol-cytochrome c oxidoreductase (cytochrome b-c1 complex, complex III, CIII), resulting in different assemblies (supercomplex SCI(1)III(2)IV(1) and megacomplex MCI(2)III(2)IV(2)). Found in a complex with TMEM177, COA6, COX18, COX20, SCO1 and SCO2. Interacts with TMEM177 in a COX20-dependent manner. Interacts with COX20. Interacts with COX16. It depends on Cu cation as a cofactor.

The protein localises to the mitochondrion inner membrane. The catalysed reaction is 4 Fe(II)-[cytochrome c] + O2 + 8 H(+)(in) = 4 Fe(III)-[cytochrome c] + 2 H2O + 4 H(+)(out). Its function is as follows. Component of the cytochrome c oxidase, the last enzyme in the mitochondrial electron transport chain which drives oxidative phosphorylation. The respiratory chain contains 3 multisubunit complexes succinate dehydrogenase (complex II, CII), ubiquinol-cytochrome c oxidoreductase (cytochrome b-c1 complex, complex III, CIII) and cytochrome c oxidase (complex IV, CIV), that cooperate to transfer electrons derived from NADH and succinate to molecular oxygen, creating an electrochemical gradient over the inner membrane that drives transmembrane transport and the ATP synthase. Cytochrome c oxidase is the component of the respiratory chain that catalyzes the reduction of oxygen to water. Electrons originating from reduced cytochrome c in the intermembrane space (IMS) are transferred via the dinuclear copper A center (CU(A)) of subunit 2 and heme A of subunit 1 to the active site in subunit 1, a binuclear center (BNC) formed by heme A3 and copper B (CU(B)). The BNC reduces molecular oxygen to 2 water molecules using 4 electrons from cytochrome c in the IMS and 4 protons from the mitochondrial matrix. The polypeptide is Cytochrome c oxidase subunit 2 (MT-CO2) (Apteryx australis (Southern brown kiwi)).